The following is a 331-amino-acid chain: Biotin synthase (331 aa).

Positions Q51–R278 constitute a Radical SAM core domain. C66, C70, and C73 together coordinate [4Fe-4S] cluster. 4 residues coordinate [2Fe-2S] cluster: C110, C141, C201, and R273.

Belongs to the radical SAM superfamily. Biotin synthase family. As to quaternary structure, homodimer. [4Fe-4S] cluster is required as a cofactor. Requires [2Fe-2S] cluster as cofactor.

The catalysed reaction is (4R,5S)-dethiobiotin + (sulfur carrier)-SH + 2 reduced [2Fe-2S]-[ferredoxin] + 2 S-adenosyl-L-methionine = (sulfur carrier)-H + biotin + 2 5'-deoxyadenosine + 2 L-methionine + 2 oxidized [2Fe-2S]-[ferredoxin]. It participates in cofactor biosynthesis; biotin biosynthesis; biotin from 7,8-diaminononanoate: step 2/2. In terms of biological role, catalyzes the conversion of dethiobiotin (DTB) to biotin by the insertion of a sulfur atom into dethiobiotin via a radical-based mechanism. The protein is Biotin synthase of Histophilus somni (strain 129Pt) (Haemophilus somnus).